Here is a 497-residue protein sequence, read N- to C-terminus: MDPLGAPSQFVDVDTLPSWGDSCQDELNSSDTTAEIFQEDTVRSPFLYNKDVNGKVVLWKGDVALLNCTAIVNTSNESLTDKNPVSESIFMLAGPDLKEDLQKLKGCRTGEAKLTKGFNLAARFIIHTVGPKYKSRYRTAAESSLYSCYRNVLQLAKEQSMSSVGFCVINSAKRGYPLEDATHIALRTVRRFLEIHGETIEKVVFAVSDLEEGTYQKLLPLYFPRSLKEENRSLPYLPADIGNAEGEPVVPERQIRISEKPGAPEDNQEEEDEGLGVDLSFIGSHAFARMEGDIDKQRKLILQGQLSEAALQKQHQRNYNRWLCQARSEDLSDIASLKALYQTGVDNCGRTVMVVVGRNIPVTLIDMDKALLYFIHVMDHIAVKEYVLVYFHTLTSEYNHLDSDFLKKLYDVVDVKYKRNLKAVYFVHPTFRSKVSTWFFTTFSVSGLKDKIHHVDSLHQLFSAISPEQIDFPPFVLEYDARENGPYYTSYPPSPDL.

The Macro domain occupies 43-223 (RSPFLYNKDV…TYQKLLPLYF (181 aa)). The tract at residues 252–273 (ERQIRISEKPGAPEDNQEEEDE) is disordered. Residues 253–263 (RQIRISEKPGA) show a composition bias toward basic and acidic residues. Residue serine 280 is modified to Phosphoserine. The CRAL-TRIO domain maps to 333 to 481 (DIASLKALYQ…FPPFVLEYDA (149 aa)).

Belongs to the GDAP2 family.

The sequence is that of Ganglioside-induced differentiation-associated protein 2 (GDAP2) from Homo sapiens (Human).